The following is a 308-amino-acid chain: MNVRGRVAPRRVTGRAMSTLLAYLALTKPRVIELLLVTAIPAMLLADRGAIHPLLMLNTLVGGMMAAAGANTLNCVADADIDKVMKRTARRPLAREAVPTRNALALGLTLTVISFFWLWCATNLLAGVLALVTVAFYVFVYTLWLKRRTSQNVVWGGAAGCMPVMIGWSAITGTIAWPALAMFAIIFFWTPPHTWALAMRYKQDYQVAGVPMLPAVATERQVTKQILIYTWLTVAATLVLALATSWLYGAVALVAGGWFLTMAHQLYAGVRAGEPVRPLRLFLQSNNYLAVVFCALAVDSVIALPTLH.

8 helical membrane passes run 20–40 (LLAY…VTAI), 50–70 (AIHP…AAGA), 102–122 (NALA…WCAT), 124–144 (LLAG…YTLW), 149–169 (TSQN…IGWS), 170–190 (AITG…FFWT), 227–249 (LIYT…WLYG), and 288–308 (YLAV…PTLH).

It belongs to the UbiA prenyltransferase family. Protoheme IX farnesyltransferase subfamily.

Its subcellular location is the cell membrane. The catalysed reaction is heme b + (2E,6E)-farnesyl diphosphate + H2O = Fe(II)-heme o + diphosphate. The protein operates within porphyrin-containing compound metabolism; heme O biosynthesis; heme O from protoheme: step 1/1. Its function is as follows. Converts heme B (protoheme IX) to heme O by substitution of the vinyl group on carbon 2 of heme B porphyrin ring with a hydroxyethyl farnesyl side group. This chain is Protoheme IX farnesyltransferase, found in Mycobacterium tuberculosis (strain ATCC 25618 / H37Rv).